We begin with the raw amino-acid sequence, 293 residues long: Acetylglutamate kinase (293 aa).

Substrate contacts are provided by residues 68–69 (GG), R90, and N189.

It belongs to the acetylglutamate kinase family. ArgB subfamily.

Its subcellular location is the cytoplasm. It carries out the reaction N-acetyl-L-glutamate + ATP = N-acetyl-L-glutamyl 5-phosphate + ADP. Its pathway is amino-acid biosynthesis; L-arginine biosynthesis; N(2)-acetyl-L-ornithine from L-glutamate: step 2/4. Functionally, catalyzes the ATP-dependent phosphorylation of N-acetyl-L-glutamate. The protein is Acetylglutamate kinase of Caldicellulosiruptor saccharolyticus (strain ATCC 43494 / DSM 8903 / Tp8T 6331).